Reading from the N-terminus, the 567-residue chain is D-lactate dehydrogenase [cytochrome], mitochondrial (567 aa).

Residues 1 to 56 (MAFASKFARSKTILSFLRPCRQLHSTPKSTGDVTVLSPVKGRRRLPTCWSSSLFPL) constitute a mitochondrion transit peptide. The FAD-binding PCMH-type domain occupies 142-319 (AVNIPDVVVF…TEITLRLQKI (178 aa)).

It belongs to the FAD-binding oxidoreductase/transferase type 4 family. As to quaternary structure, homodimer. FAD is required as a cofactor. As to expression, expressed in leaves, stems, flowers and roots.

The protein localises to the mitochondrion. The catalysed reaction is (R)-lactate + 2 Fe(III)-[cytochrome c] = 2 Fe(II)-[cytochrome c] + pyruvate + 2 H(+). Its activity is regulated as follows. Inhibited by cyanide ions. Catalyzes the stereospecific oxidation of D-lactate to pyruvate. Involved in the detoxification of methylglyoxal and D-lactate, but probably not involved in the metabolization of glycolate. The protein is D-lactate dehydrogenase [cytochrome], mitochondrial of Arabidopsis thaliana (Mouse-ear cress).